We begin with the raw amino-acid sequence, 450 residues long: UDP-N-acetylmuramate--L-alanine ligase (450 aa).

Position 112–118 (112–118 (GTHGKTT)) interacts with ATP.

Belongs to the MurCDEF family.

It localises to the cytoplasm. The enzyme catalyses UDP-N-acetyl-alpha-D-muramate + L-alanine + ATP = UDP-N-acetyl-alpha-D-muramoyl-L-alanine + ADP + phosphate + H(+). The protein operates within cell wall biogenesis; peptidoglycan biosynthesis. Functionally, cell wall formation. In Endomicrobium trichonymphae, this protein is UDP-N-acetylmuramate--L-alanine ligase.